A 286-amino-acid chain; its full sequence is Polyamine aminopropyltransferase (286 aa).

The PABS domain maps to Thr-5 to Asp-238. Gln-33 provides a ligand contact to S-methyl-5'-thioadenosine. Residues His-64 and Asp-88 each coordinate spermidine. Residues Glu-108 and Asp-140–Gly-141 each bind S-methyl-5'-thioadenosine. The active-site Proton acceptor is Asp-158. Position 158-161 (Asp-158–Asp-161) interacts with spermidine. Pro-165 is an S-methyl-5'-thioadenosine binding site.

It belongs to the spermidine/spermine synthase family. As to quaternary structure, homodimer or homotetramer.

It is found in the cytoplasm. It catalyses the reaction S-adenosyl 3-(methylsulfanyl)propylamine + putrescine = S-methyl-5'-thioadenosine + spermidine + H(+). Its pathway is amine and polyamine biosynthesis; spermidine biosynthesis; spermidine from putrescine: step 1/1. Functionally, catalyzes the irreversible transfer of a propylamine group from the amino donor S-adenosylmethioninamine (decarboxy-AdoMet) to putrescine (1,4-diaminobutane) to yield spermidine. The protein is Polyamine aminopropyltransferase of Salmonella schwarzengrund (strain CVM19633).